The sequence spans 194 residues: MSKIKLIVGLANPGADYAQTRHNAGAWYVDLLAQRHQQSLKEESKFFGYTARINLNGNDVRLLVPTTFMNLSGKAVLAMANFYRIQPDEILVAHDELDLPPGVVKMKLGGGNGGHNGLKDIQSKFSNNPNFYRLRIGIGHPGDKNKVVGFVLGKPPTSEQKLIDDAIDEALACTDILMRDGYEKAINRLHSFKA.

A tRNA-binding site is contributed by tyrosine 17. Catalysis depends on histidine 22, which acts as the Proton acceptor. TRNA is bound by residues phenylalanine 68, asparagine 70, and asparagine 116.

Belongs to the PTH family. In terms of assembly, monomer.

Its subcellular location is the cytoplasm. It carries out the reaction an N-acyl-L-alpha-aminoacyl-tRNA + H2O = an N-acyl-L-amino acid + a tRNA + H(+). In terms of biological role, hydrolyzes ribosome-free peptidyl-tRNAs (with 1 or more amino acids incorporated), which drop off the ribosome during protein synthesis, or as a result of ribosome stalling. Catalyzes the release of premature peptidyl moieties from peptidyl-tRNA molecules trapped in stalled 50S ribosomal subunits, and thus maintains levels of free tRNAs and 50S ribosomes. The polypeptide is Peptidyl-tRNA hydrolase (Proteus mirabilis (strain HI4320)).